The following is a 428-amino-acid chain: Lipoamide acyltransferase component of branched-chain alpha-keto acid dehydrogenase complex (428 aa).

The Lipoyl-binding domain maps to 3–78 (THVIKMPDIG…AVGGELIRLE (76 aa)). Lys-44 is modified (N6-lipoyllysine). The disordered stretch occupies residues 88–145 (SPAAATPAAPVAATPEKPKEAPVAAPKAAAEAPRALRDSEAPRQRRQPGERPLASPAV). A compositionally biased stretch (low complexity) spans 89–120 (PAAATPAAPVAATPEKPKEAPVAAPKAAAEAP). Over residues 121–136 (RALRDSEAPRQRRQPG) the composition is skewed to basic and acidic residues. Positions 140–177 (LASPAVRQRARDLGIELQFVQGSGPAGRVLHEDLDAYL) constitute a Peripheral subunit-binding (PSBD) domain. Residues His-400 and Asp-404 contribute to the active site.

This sequence belongs to the 2-oxoacid dehydrogenase family. In terms of assembly, forms a 24-polypeptide structural core with octahedral symmetry. (R)-lipoate is required as a cofactor.

The enzyme catalyses N(6)-[(R)-dihydrolipoyl]-L-lysyl-[protein] + 2-methylpropanoyl-CoA = N(6)-[(R)-S(8)-2-methylpropanoyldihydrolipoyl]-L-lysyl-[protein] + CoA. The branched-chain alpha-keto dehydrogenase complex catalyzes the overall conversion of alpha-keto acids to acyl-CoA and CO(2). It contains multiple copies of three enzymatic components: branched-chain alpha-keto acid decarboxylase (E1), lipoamide acyltransferase (E2) and lipoamide dehydrogenase (E3). The chain is Lipoamide acyltransferase component of branched-chain alpha-keto acid dehydrogenase complex (bkdB) from Pseudomonas aeruginosa (strain ATCC 15692 / DSM 22644 / CIP 104116 / JCM 14847 / LMG 12228 / 1C / PRS 101 / PAO1).